We begin with the raw amino-acid sequence, 328 residues long: Lipoate--protein ligase 1 (328 aa).

Residues 27-214 form the BPL/LPL catalytic domain; the sequence is PAEESYFLFY…TIFGETEVEE (188 aa). Residues R69, 74 to 77, and K131 contribute to the ATP site; that span reads GAVY. K131 is a (R)-lipoate binding site.

It carries out the reaction L-lysyl-[lipoyl-carrier protein] + (R)-lipoate + ATP = N(6)-[(R)-lipoyl]-L-lysyl-[lipoyl-carrier protein] + AMP + diphosphate + H(+). Its pathway is protein modification; protein lipoylation via exogenous pathway; protein N(6)-(lipoyl)lysine from lipoate: step 1/2. The protein operates within protein modification; protein lipoylation via exogenous pathway; protein N(6)-(lipoyl)lysine from lipoate: step 2/2. Its function is as follows. Catalyzes the lipoylation of proteins, such as GcvH (SAV0833) and GcvH-L (SAV0324), likely via the ATP-dependent activation of lipoate to lipoyl-AMP and the transfer of the activated lipoyl onto the lipoyl domain of the target protein. The chain is Lipoate--protein ligase 1 from Staphylococcus aureus (strain Mu50 / ATCC 700699).